A 373-amino-acid polypeptide reads, in one-letter code: Dual-specificity RNA methyltransferase RlmN (373 aa).

E94 functions as the Proton acceptor in the catalytic mechanism. In terms of domain architecture, Radical SAM core spans 100 to 339 (EEDRATLCVS…VIVRKTRGDD (240 aa)). C107 and C344 form a disulfide bridge. Positions 114, 118, and 121 each coordinate [4Fe-4S] cluster. Residues 168–169 (GE), S200, 222–224 (SIH), and N301 each bind S-adenosyl-L-methionine. C344 acts as the S-methylcysteine intermediate in catalysis.

This sequence belongs to the radical SAM superfamily. RlmN family. Requires [4Fe-4S] cluster as cofactor.

Its subcellular location is the cytoplasm. It catalyses the reaction adenosine(2503) in 23S rRNA + 2 reduced [2Fe-2S]-[ferredoxin] + 2 S-adenosyl-L-methionine = 2-methyladenosine(2503) in 23S rRNA + 5'-deoxyadenosine + L-methionine + 2 oxidized [2Fe-2S]-[ferredoxin] + S-adenosyl-L-homocysteine. It carries out the reaction adenosine(37) in tRNA + 2 reduced [2Fe-2S]-[ferredoxin] + 2 S-adenosyl-L-methionine = 2-methyladenosine(37) in tRNA + 5'-deoxyadenosine + L-methionine + 2 oxidized [2Fe-2S]-[ferredoxin] + S-adenosyl-L-homocysteine. Its function is as follows. Specifically methylates position 2 of adenine 2503 in 23S rRNA and position 2 of adenine 37 in tRNAs. m2A2503 modification seems to play a crucial role in the proofreading step occurring at the peptidyl transferase center and thus would serve to optimize ribosomal fidelity. This chain is Dual-specificity RNA methyltransferase RlmN, found in Shewanella sediminis (strain HAW-EB3).